Here is a 169-residue protein sequence, read N- to C-terminus: uncharacterized protein (169 aa).

In terms of domain architecture, HTH asnC-type spans 18–79; it reads LDRADVALLN…IVSPKAVGRP (62 aa). The H-T-H motif DNA-binding region spans 37–56; it reads SEELADKVGLSPTACQRRLK.

This is an uncharacterized protein from Sinorhizobium fredii (strain NBRC 101917 / NGR234).